We begin with the raw amino-acid sequence, 317 residues long: Ribosomal protein L11 methyltransferase (317 aa).

Positions 158, 179, 201, and 244 each coordinate S-adenosyl-L-methionine.

The protein belongs to the methyltransferase superfamily. PrmA family.

It is found in the cytoplasm. The catalysed reaction is L-lysyl-[protein] + 3 S-adenosyl-L-methionine = N(6),N(6),N(6)-trimethyl-L-lysyl-[protein] + 3 S-adenosyl-L-homocysteine + 3 H(+). Functionally, methylates ribosomal protein L11. The sequence is that of Ribosomal protein L11 methyltransferase from Streptococcus pyogenes serotype M18 (strain MGAS8232).